An 865-amino-acid chain; its full sequence is Taste receptor type 1 member 3 (865 aa).

The N-terminal stretch at 1-24 (MPGLALLGLTALLGLTALLDHGEG) is a signal peptide. Residues 25–573 (ATSCLSQQLR…FLAWGEPAVL (549 aa)) lie on the Extracellular side of the membrane. Residues Asn134 and Asn267 are each glycosylated (N-linked (GlcNAc...) asparagine). A helical membrane pass occupies residues 574-594 (LLLALLALALGLALAALGLFL). Residues 595–606 (WHSDSPLVQASG) lie on the Cytoplasmic side of the membrane. A helical membrane pass occupies residues 607 to 627 (GPRACFGLACLGLVCLSVLLF). The Extracellular portion of the chain corresponds to 628 to 642 (PGQPGPASCLAQQPL). The helical transmembrane segment at 643 to 663 (FHLPLTGCLSTFFLQAAEIFV) threads the bilayer. Topologically, residues 664–685 (GSELPPSWAEKMRGRLRGPWAW) are cytoplasmic. Residues 686–706 (LVVLLAMLAEAALCAWYLVAF) form a helical membrane-spanning segment. Topologically, residues 707–732 (PPEVVTDWRVLPTEALVHCHVHSWIS) are extracellular. The chain crosses the membrane as a helical span at residues 733–753 (FGLVHATNAMLAFLCFLGTFL). Residues 754–765 (VQSRPGRYNGAR) lie on the Cytoplasmic side of the membrane. Residues 766-786 (GLTFAMLAYFITWISFVPLFA) traverse the membrane as a helical segment. Topologically, residues 787–794 (NVHVAYQP) are extracellular. Residues 795-815 (AVQMGTILLCALGILATFHLP) traverse the membrane as a helical segment. The Cytoplasmic portion of the chain corresponds to 816 to 865 (KCYLLLQRPELNTPEFFLEDNARAQGSSWGQGRGESGQKQVTPDPVTSPQ). The disordered stretch occupies residues 840-865 (QGSSWGQGRGESGQKQVTPDPVTSPQ). A compositionally biased stretch (polar residues) spans 852 to 865 (GQKQVTPDPVTSPQ).

Belongs to the G-protein coupled receptor 3 family. TAS1R subfamily. Forms homodimers or a heterodimer with TAS1R1. In terms of tissue distribution, expressed in taste buds.

It is found in the cell membrane. Functionally, putative taste receptor. TAS1R1/TAS1R3 responds to the umami taste stimulus (the taste of monosodium glutamate). The protein is Taste receptor type 1 member 3 (TAS1R3) of Felis catus (Cat).